We begin with the raw amino-acid sequence, 216 residues long: CASP-like protein 2U1 (216 aa).

The interval Met-1 to Ser-30 is disordered. Residues Met-1–Thr-37 lie on the Cytoplasmic side of the membrane. A helical transmembrane segment spans residues Ala-38–Val-58. The Extracellular portion of the chain corresponds to Thr-59–Lys-86. The chain crosses the membrane as a helical span at residues Val-87–Ile-107. The Cytoplasmic portion of the chain corresponds to Val-108–Gln-128. The helical transmembrane segment at Phe-129–Ala-148 threads the bilayer. Residues Glu-149–Gln-170 are Extracellular-facing. Residues Val-171 to Leu-191 form a helical membrane-spanning segment. Residues Ser-192–Gln-216 lie on the Cytoplasmic side of the membrane.

The protein belongs to the Casparian strip membrane proteins (CASP) family. As to quaternary structure, homodimer and heterodimers.

The protein localises to the cell membrane. The polypeptide is CASP-like protein 2U1 (Marchantia polymorpha (Common liverwort)).